We begin with the raw amino-acid sequence, 61 residues long: Large ribosomal subunit protein bL28 (61 aa).

The protein belongs to the bacterial ribosomal protein bL28 family.

This Geobacillus stearothermophilus (Bacillus stearothermophilus) protein is Large ribosomal subunit protein bL28 (rpmB).